A 1323-amino-acid polypeptide reads, in one-letter code: Alpha-factor-transporting ATPase (1323 aa).

Basic and acidic residues predominate over residues 1–10 (MFQEKSEKSS). Positions 1–23 (MFQEKSEKSSFPKRSSSLRSPSD) are disordered. Residues 12–23 (PKRSSSLRSPSD) show a composition bias toward low complexity. N-linked (GlcNAc...) asparagine glycosylation is present at Asn37. The helical transmembrane segment at 42–62 (WPLILVGILLMGGSAIATLMN) threads the bilayer. One can recognise an ABC transmembrane type-1 1 domain in the interval 45-337 (ILVGILLMGG…ITELLAILNT (293 aa)). An N-linked (GlcNAc...) asparagine glycan is attached at Asn83. Residues 93–113 (LCVGLIGIGCCKMILVWLGMF) traverse the membrane as a helical segment. An N-linked (GlcNAc...) asparagine glycan is attached at Asn136. The next 4 helical transmembrane spans lie at 169-189 (ILAS…MSFY), 192-212 (WSTT…GWYF), 281-301 (VLKT…NYLL), and 315-335 (FSSC…LAIL). An ABC transporter 1 domain is found at 373 to 609 (IYFKNVWFES…EIVQNYKSQG (237 aa)). Residue 408-415 (GKSGSGKS) participates in ATP binding. N-linked (GlcNAc...) asparagine glycosylation occurs at Asn450. A helical membrane pass occupies residues 677–697 (LLGFGILLAIFQGVSSPVFSY). The ABC transmembrane type-1 2 domain maps to 678 to 969 (LGFGILLAIF…LIHQLPEITR (292 aa)). N-linked (GlcNAc...) asparagine glycosylation is present at Asn714. A helical transmembrane segment spans residues 724–744 (CISLSIAIFTGVTSYLSEFIL). N-linked (GlcNAc...) asparagine glycans are attached at residues Asn777 and Asn789. The next 3 helical transmembrane spans lie at 801-821 (FFPL…WSIV), 828-848 (LVGI…GKIL), and 909-929 (IGFA…LFYG). An N-linked (GlcNAc...) asparagine glycan is attached at Asn939. A helical membrane pass occupies residues 941–961 (SQLLQVITLLSFTISNASILI). Residues Asn991, Asn1030, and Asn1039 are each glycosylated (N-linked (GlcNAc...) asparagine). Residues 1035–1321 (ISFNNVSFSY…DGEFTKITKT (287 aa)) form the ABC transporter 2 domain. 1071–1078 (GQSGSGKS) contributes to the ATP binding site. An N-linked (GlcNAc...) asparagine glycan is attached at Asn1097. The chain crosses the membrane as a helical span at residues 1120-1140 (GLLCQTIAIVPQFPKFFSGTI). 3 N-linked (GlcNAc...) asparagine glycosylation sites follow: Asn1143, Asn1149, and Asn1157. Residues 1170–1190 (ILKLVNLHQFIVSLPQGLLTI) form a helical membrane-spanning segment. N-linked (GlcNAc...) asparagine glycosylation is present at Asn1192. Positions 1194-1208 (SDNDNDNGNENENEN) are enriched in acidic residues. Residues 1194–1217 (SDNDNDNGNENENENENGNTISTS) form a disordered region.

Belongs to the ABC transporter superfamily. Alpha-factor sex pheromone exporter (TC 3.A.1.206) family.

The protein resides in the membrane. The catalysed reaction is an [alpha-factor](in) + ATP + H2O = an [alpha-factor](out) + ADP + phosphate + H(+). In Candida albicans (strain WO-1) (Yeast), this protein is Alpha-factor-transporting ATPase (HST6).